Consider the following 339-residue polypeptide: Glucokinase (339 aa).

16–21 (GDIGGT) lines the ATP pocket.

This sequence belongs to the bacterial glucokinase family.

The protein localises to the cytoplasm. The enzyme catalyses D-glucose + ATP = D-glucose 6-phosphate + ADP + H(+). This Sinorhizobium fredii (strain NBRC 101917 / NGR234) protein is Glucokinase.